We begin with the raw amino-acid sequence, 396 residues long: Serine/threonine-protein kinase GRIK1 (396 aa).

A disordered region spans residues 22 to 65 (ERSRHSPNPYDDDTYSHDSGETSNPGGDDEEGEEEEEVEELSRS). The segment covering 48 to 60 (GDDEEGEEEEEVE) has biased composition (acidic residues). The region spanning 108-369 (FVRERKIGSG…LKAVAEHPWI (262 aa)) is the Protein kinase domain. ATP-binding positions include 114–122 (IGSGSYGKV) and K137. T154 is subject to Phosphothreonine; by autocatalysis. The Proton acceptor role is filled by D239. S261 carries the post-translational modification Phosphoserine; by KIN10.

Belongs to the protein kinase superfamily. Ser/Thr protein kinase family. As to quaternary structure, associates with the SNF1-related protein kinase (SnRK) complex. Interacts with AL1, a geminivirus (TGMV) protein essential for viral replication. Expressed in shoot apical meristem, leaf primordium and emerging petiole (at protein level).

It localises to the cytoplasm. The protein resides in the nucleus. It catalyses the reaction L-seryl-[protein] + ATP = O-phospho-L-seryl-[protein] + ADP + H(+). It carries out the reaction L-threonyl-[protein] + ATP = O-phospho-L-threonyl-[protein] + ADP + H(+). Activated when autophosphorylated at Thr-154 and inactivated when phosphorylated at Ser-261 by SnRK1.1/KIN10. Activates SnRK1.1/KIN10 and SnRK1.2/KIN11 by phosphorylation of their activation-loop 'Thr-198' and 'Thr-176', respectively. Required for the regulation by SnRK1 kinases of the transcription of a large set of genes, the modification the activity of metabolic enzymes, and the control of various nutrient-responsive cellular developmental processes. The chain is Serine/threonine-protein kinase GRIK1 (GRIK1) from Arabidopsis thaliana (Mouse-ear cress).